Here is a 227-residue protein sequence, read N- to C-terminus: Ribosomal RNA large subunit methyltransferase E (227 aa).

5 residues coordinate S-adenosyl-L-methionine: Gly78, Trp80, Asp103, Asp119, and Asp143. Lys183 (proton acceptor) is an active-site residue.

This sequence belongs to the class I-like SAM-binding methyltransferase superfamily. RNA methyltransferase RlmE family.

It localises to the cytoplasm. The catalysed reaction is uridine(2552) in 23S rRNA + S-adenosyl-L-methionine = 2'-O-methyluridine(2552) in 23S rRNA + S-adenosyl-L-homocysteine + H(+). Functionally, specifically methylates the uridine in position 2552 of 23S rRNA at the 2'-O position of the ribose in the fully assembled 50S ribosomal subunit. This chain is Ribosomal RNA large subunit methyltransferase E, found in Rickettsia felis (strain ATCC VR-1525 / URRWXCal2) (Rickettsia azadi).